The sequence spans 193 residues: Holliday junction branch migration complex subunit RuvA (193 aa).

Residues methionine 1–alanine 63 form a domain I region. Positions glutamate 64–isoleucine 142 are domain II. The interval serine 143 to serine 145 is flexible linker. Residues serine 145–leucine 193 are domain III.

Belongs to the RuvA family. In terms of assembly, homotetramer. Forms an RuvA(8)-RuvB(12)-Holliday junction (HJ) complex. HJ DNA is sandwiched between 2 RuvA tetramers; dsDNA enters through RuvA and exits via RuvB. An RuvB hexamer assembles on each DNA strand where it exits the tetramer. Each RuvB hexamer is contacted by two RuvA subunits (via domain III) on 2 adjacent RuvB subunits; this complex drives branch migration. In the full resolvosome a probable DNA-RuvA(4)-RuvB(12)-RuvC(2) complex forms which resolves the HJ.

The protein resides in the cytoplasm. The RuvA-RuvB-RuvC complex processes Holliday junction (HJ) DNA during genetic recombination and DNA repair, while the RuvA-RuvB complex plays an important role in the rescue of blocked DNA replication forks via replication fork reversal (RFR). RuvA specifically binds to HJ cruciform DNA, conferring on it an open structure. The RuvB hexamer acts as an ATP-dependent pump, pulling dsDNA into and through the RuvAB complex. HJ branch migration allows RuvC to scan DNA until it finds its consensus sequence, where it cleaves and resolves the cruciform DNA. This is Holliday junction branch migration complex subunit RuvA from Flavobacterium psychrophilum (strain ATCC 49511 / DSM 21280 / CIP 103535 / JIP02/86).